The chain runs to 423 residues: Cell adhesion molecule CEACAM16 (423 aa).

An N-terminal signal peptide occupies residues 1 to 22 (MKMPLTWGSWFLLSAWILNAGA). The N-linked (GlcNAc...) asparagine glycan is linked to Asn38. The interval 77-96 (ETPGPAHTGREAVRPDGSLD) is disordered. Over residues 84 to 95 (TGREAVRPDGSL) the composition is skewed to basic and acidic residues. Ig-like C2-type domains follow at residues 134 to 219 (PPTV…LNLT) and 224 to 310 (PERV…ASVV). Cys155 and Cys202 are disulfide-bonded. Asn217 is a glycosylation site (N-linked (GlcNAc...) asparagine). A disulfide bridge connects residues Cys253 and Cys294.

The protein belongs to the immunoglobulin superfamily. CEA family. Homooligomer; can for homodimers and homotetramers. Interacts with TECTA and TECTB.

It localises to the secreted. Its function is as follows. Required for proper hearing, plays a role in maintaining the integrity of the tectorial membrane. The protein is Cell adhesion molecule CEACAM16 of Rattus norvegicus (Rat).